The sequence spans 283 residues: MAISAAQVKELRERTGAGMMDCKKALEETNGDMELAIDNMRKSGAAKAAKKAGNIAADGTILIKNGEGFAVLLEVNCQTDFVAKDANFLGFANAVLDVAAASKVSLEDLKAQFEEARVALVAKIGENINVRRVEYIDGTQLASYRHGERIGVVVTGEADEETLKHLAMHVAASKPEYVNPEDVPADVVAREQALQIEISMNEGKPAEIAEKMVVGRMKKFTGEISLTGQAYIMEPKKTVGEFLKEKGAKVTNFIRLEVGEGIEKKEEDFAAEVAAQIAASKKA.

The interval 79-82 is involved in Mg(2+) ion dislocation from EF-Tu; that stretch reads TDFV.

Belongs to the EF-Ts family.

The protein localises to the cytoplasm. In terms of biological role, associates with the EF-Tu.GDP complex and induces the exchange of GDP to GTP. It remains bound to the aminoacyl-tRNA.EF-Tu.GTP complex up to the GTP hydrolysis stage on the ribosome. This Shewanella sp. (strain ANA-3) protein is Elongation factor Ts.